Reading from the N-terminus, the 678-residue chain is MVPSTFSRLKAARCLPVVLAALIFAGCGTHTPDQSTAYMQGTAQADSAFYLQQMQQSSDDTRINWQLLAIRALVKEGKTGQAVELFNQLPQELNDSQRREKTLLAAEIKLAQKDFAGAQNLLAKITPADLEQNQQARYWQAKIDASQGRPSIDLLRALIAQEPLLGAKEKQQNIDATWQALSSMTQEQANTLVINADENILQGWLDLQRVWFDNRNDPDMMKAGIADWQKRYPNNPGAKMLPTQLVNVKAFKPASTNKIALLLPLNGQAAVFGRTIQQGFEAAKNIGTQPVAAQVAAAPAADVAEQPQPQTADSVASPAQASVSDLTGDQPAAQPVPVSAPATSTAAVSAPANPSAELKIYDTSSQPLSQILSQVQQDGASIVVGPLLKNNVEELLKSNTPLNVLALNQPENIENRVNICYFALSPEDEARDAARHIRDQGKQAPLVLIPRSALGDRVANAFAQEWQKLGGGTVLQQKFGSTSELRAGVNGGSGIALTGSPITPRATTDSGMTTNNPTLQTTPTDDQFTNNGGRVDAVYIVATPGEIAFIKPMIAMRNGSQSGATLYASSRSAQGTAGPDFRLEMEGLQYSEIPMLAGGNLPLMQQALSAVNNDYSLARMYAMGVDAWSLANHFSQMRQVQGFEINGNTGSLTANPDCVINRKLSWLQYQQGQVVPAS.

An N-terminal signal peptide occupies residues 1 to 26 (MVPSTFSRLKAARCLPVVLAALIFAG). Residue C27 is the site of N-palmitoyl cysteine attachment. C27 carries the S-diacylglycerol cysteine lipid modification. Low complexity predominate over residues 300-310 (AADVAEQPQPQ). Disordered stretches follow at residues 300-340 (AADV…PVSA) and 496-528 (ALTG…DDQF). Residues 311–327 (TADSVASPAQASVSDLT) are compositionally biased toward polar residues. Low complexity-rich tracts occupy residues 330 to 340 (QPAAQPVPVSA) and 513 to 528 (TTNN…DDQF).

The protein belongs to the LpoA family. Interacts with PBP1a.

It localises to the cell outer membrane. Functionally, regulator of peptidoglycan synthesis that is essential for the function of penicillin-binding protein 1A (PBP1a). This Shigella flexneri serotype X (strain 2002017) protein is Penicillin-binding protein activator LpoA.